Reading from the N-terminus, the 68-residue chain is Palustrin-1c (68 aa).

An N-terminal signal peptide occupies residues 1–22; the sequence is MFTTKKSLLLLFFLGTISLSLC. The propeptide occupies 23–39; the sequence is EEERGADEEEGDGEKLT. A disulfide bridge connects residues Cys62 and Cys68.

As to expression, expressed by the skin glands.

The protein localises to the secreted. Its function is as follows. Antimicrobial activity against Gram-negative bacterium E.coli. Stimulates insulin release. The polypeptide is Palustrin-1c (Lithobates palustris (Pickerel frog)).